An 846-amino-acid polypeptide reads, in one-letter code: Putative transcriptional regulator tpeD (846 aa).

A BED-type; degenerate zinc finger spans residues 104 to 166; that stretch reads KHQSECWQHF…NCRKSVPVSK (63 aa). A disordered region spans residues 734–846; that stretch reads RAREERDAQQ…RDEDFVYETP (113 aa). Over residues 756-769 the composition is skewed to acidic residues; the sequence is PISDSEEAESEDES. Residues 773–786 are compositionally biased toward low complexity; sequence PQSPQASQARSQRS. A compositionally biased stretch (acidic residues) spans 797–809; the sequence is PLIELDGNEEDEV.

The protein localises to the nucleus. In terms of biological role, putative transcriptional regulator; part of the gene cluster that mediates the biosynthesis of polyesters containing 2,4-dihydroxy-6-(2-hydroxypropyl)benzoate and 3-hydroxybutyrate moieties, such as talapolyester G, 15G256beta and 15G256beta-2; as well as to oxidized derivatives such as 15G256alpha. This Talaromyces stipitatus (strain ATCC 10500 / CBS 375.48 / QM 6759 / NRRL 1006) (Penicillium stipitatum) protein is Putative transcriptional regulator tpeD.